The chain runs to 265 residues: Indole-3-glycerol phosphate synthase (265 aa).

The protein belongs to the TrpC family.

The catalysed reaction is 1-(2-carboxyphenylamino)-1-deoxy-D-ribulose 5-phosphate + H(+) = (1S,2R)-1-C-(indol-3-yl)glycerol 3-phosphate + CO2 + H2O. It participates in amino-acid biosynthesis; L-tryptophan biosynthesis; L-tryptophan from chorismate: step 4/5. The sequence is that of Indole-3-glycerol phosphate synthase from Desulforamulus reducens (strain ATCC BAA-1160 / DSM 100696 / MI-1) (Desulfotomaculum reducens).